We begin with the raw amino-acid sequence, 390 residues long: Cell adhesion molecule 4 (390 aa).

Residues 1-27 form the signal peptide; that stretch reads MAPALTALNRCFVLGILLLVTAGTAFS. An Ig-like V-type domain is found at 28-122; sequence QEVQAENVTV…DTHHQIATLT (95 aa). Residues 28 to 326 are Extracellular-facing; the sequence is QEVQAENVTV…IEAQTQVPYA (299 aa). N-linked (GlcNAc...) asparagine glycans are attached at residues asparagine 34 and asparagine 70. 3 disulfides stabilise this stretch: cysteine 47-cysteine 107, cysteine 148-cysteine 202, and cysteine 247-cysteine 293. Ig-like C2-type domains follow at residues 127 to 219 and 226 to 309; these read PDNP…TQYE and PTAS…YVLV. N-linked (GlcNAc...) asparagine glycosylation is found at asparagine 264 and asparagine 288. A helical membrane pass occupies residues 327–347; the sequence is VIGGILALLVFLVICILIVMV. Residues 348 to 390 are Cytoplasmic-facing; it reads WCSVRQKGSYLTHEASGLDEHGEAREAFLNGGENHKRKEEFFI.

It belongs to the nectin family.

It is found in the membrane. Functionally, involved in the cell-cell adhesion. This chain is Cell adhesion molecule 4 (cadm4), found in Xenopus laevis (African clawed frog).